The primary structure comprises 493 residues: Xaa-Pro dipeptidase (493 aa).

An N-acetylalanine modification is found at Ala2. At Ser167 the chain carries Phosphoserine. A dipeptide is bound at residue His255. The Mn(2+) site is built by Asp276, Asp287, and His370. Position 287 (Asp287) interacts with a dipeptide. Positions 377 and 398 each coordinate a dipeptide. Glu412 and Glu452 together coordinate Mn(2+).

Belongs to the peptidase M24B family. Eukaryotic-type prolidase subfamily. As to quaternary structure, homodimer. Mn(2+) serves as cofactor.

The enzyme catalyses Xaa-L-Pro dipeptide + H2O = an L-alpha-amino acid + L-proline. Its activity is regulated as follows. Specifically inhibited by the pseudodipeptide CQ31. Inhibition by CQ31 indirectly activates the CARD8 inflammasome: dipeptide accumulation following PEPD inactivation weaky inhibit dipeptidyl peptidases DDP8 and DPP9, relieving DPP8- and/or DPP9-mediated inhibition of CARD8. Functionally, dipeptidase that catalyzes the hydrolysis of dipeptides with a prolyl (Xaa-Pro) or hydroxyprolyl residue in the C-terminal position. The preferred dipeptide substrate is Gly-Pro, but other Xaa-Pro dipeptides, such as Ala-Pro, Met-Pro, Phe-Pro, Val-Pro and Leu-Pro, can be cleaved. Plays an important role in collagen metabolism because the high level of iminoacids in collagen. The sequence is that of Xaa-Pro dipeptidase from Homo sapiens (Human).